Reading from the N-terminus, the 330-residue chain is Ribosomal RNA small subunit methyltransferase H (330 aa).

S-adenosyl-L-methionine-binding positions include 35–37 (GGY), aspartate 53, phenylalanine 80, aspartate 101, and glutamine 108.

Belongs to the methyltransferase superfamily. RsmH family.

The protein resides in the cytoplasm. It catalyses the reaction cytidine(1402) in 16S rRNA + S-adenosyl-L-methionine = N(4)-methylcytidine(1402) in 16S rRNA + S-adenosyl-L-homocysteine + H(+). Specifically methylates the N4 position of cytidine in position 1402 (C1402) of 16S rRNA. The sequence is that of Ribosomal RNA small subunit methyltransferase H from Rhodopseudomonas palustris (strain BisB18).